The sequence spans 366 residues: Phenylalanine--tRNA ligase alpha subunit (366 aa).

Glutamate 259 lines the Mg(2+) pocket.

The protein belongs to the class-II aminoacyl-tRNA synthetase family. Phe-tRNA synthetase alpha subunit type 1 subfamily. Tetramer of two alpha and two beta subunits. The cofactor is Mg(2+).

The protein localises to the cytoplasm. It carries out the reaction tRNA(Phe) + L-phenylalanine + ATP = L-phenylalanyl-tRNA(Phe) + AMP + diphosphate + H(+). The sequence is that of Phenylalanine--tRNA ligase alpha subunit from Erythrobacter litoralis (strain HTCC2594).